The sequence spans 467 residues: Glutamine synthetase (467 aa).

Positions 14–98 (EEVEYVDIRF…VHCNVVEPDT (85 aa)) constitute a GS beta-grasp domain. The region spanning 106–467 (PRGAAVKAEA…PVEYQMYYSC (362 aa)) is the GS catalytic domain. Residues Glu-131 and Glu-133 each coordinate Mg(2+). Residue Asp-209 participates in ATP binding. Mg(2+) contacts are provided by Glu-214 and Glu-221. Residues 265–266 (NG) and Gly-266 contribute to the L-glutamate site. His-270 contributes to the Mg(2+) binding site. ATP is bound by residues 272 to 274 (NMS) and Ser-274. The L-glutamate site is built by Arg-320, Glu-326, and Arg-338. The ATP site is built by Arg-338 and Arg-343. Glu-356 is a binding site for Mg(2+). Arg-358 is a binding site for L-glutamate. Tyr-396 carries the post-translational modification O-AMP-tyrosine.

Belongs to the glutamine synthetase family. As to quaternary structure, oligomer of 12 subunits arranged in the form of two hexameric ring. It depends on Mg(2+) as a cofactor.

It localises to the cytoplasm. The enzyme catalyses L-glutamate + NH4(+) + ATP = L-glutamine + ADP + phosphate + H(+). The activity of this enzyme could be controlled by adenylation under conditions of abundant glutamine. Functionally, catalyzes the ATP-dependent biosynthesis of glutamine from glutamate and ammonia. The protein is Glutamine synthetase of Cereibacter sphaeroides (Rhodobacter sphaeroides).